The following is a 92-amino-acid chain: DNA-directed RNA polymerase subunit Rpo11 (92 aa).

Belongs to the archaeal Rpo11/eukaryotic RPB11/RPC19 RNA polymerase subunit family. In terms of assembly, part of the 13-subunit RNA polymerase complex.

The protein resides in the cytoplasm. The enzyme catalyses RNA(n) + a ribonucleoside 5'-triphosphate = RNA(n+1) + diphosphate. Its function is as follows. DNA-dependent RNA polymerase (RNAP) catalyzes the transcription of DNA into RNA using the four ribonucleoside triphosphates as substrates. The polypeptide is DNA-directed RNA polymerase subunit Rpo11 (Saccharolobus solfataricus (strain ATCC 35092 / DSM 1617 / JCM 11322 / P2) (Sulfolobus solfataricus)).